The primary structure comprises 354 residues: Uroporphyrinogen decarboxylase (354 aa).

Substrate is bound by residues 27-31 (RQAGR), D77, Y154, S209, and H327.

The protein belongs to the uroporphyrinogen decarboxylase family. Homodimer.

Its subcellular location is the cytoplasm. It carries out the reaction uroporphyrinogen III + 4 H(+) = coproporphyrinogen III + 4 CO2. The protein operates within porphyrin-containing compound metabolism; protoporphyrin-IX biosynthesis; coproporphyrinogen-III from 5-aminolevulinate: step 4/4. Functionally, catalyzes the decarboxylation of four acetate groups of uroporphyrinogen-III to yield coproporphyrinogen-III. The chain is Uroporphyrinogen decarboxylase from Saccharophagus degradans (strain 2-40 / ATCC 43961 / DSM 17024).